A 122-amino-acid chain; its full sequence is uncharacterized protein (122 aa).

Residues 1 to 24 (MKNRKFSNLLLLRLRILCFNKKPA) lie on the Cytoplasmic side of the membrane. Residues 25–45 (FAATSYAFFFRNFSVLIFIMV) form a helical membrane-spanning segment. At 46–57 (PDEKENGAAADN) the chain is on the extracellular side. Residues 58-78 (SFSLLIGRGVVLFLFYCPTAL) form a helical membrane-spanning segment. The Cytoplasmic segment spans residues 79-122 (KMHGPVPAHWFCDKNIEAIQSDGQIRLLRSGPFPWSHGTCIRGA).

It localises to the membrane. This is an uncharacterized protein from Saccharomyces cerevisiae (strain ATCC 204508 / S288c) (Baker's yeast).